Here is a 625-residue protein sequence, read N- to C-terminus: MSETTKSGSKKSGQTSRRAIHSCLACRRKKLKCDHGRPCSNCLKRSTIQSCIYIDPGKTNYDKRFERGSEADELIDQLLSRVSMLEKRLNEVGTKSQSDYENQQSHNLPSTPSADAETQRNIGSLSVLDDTKSQYANYSSSSHVLWHLRNYHYLNLDQDIQEENDSLISPFFFRISPNESAYDYLPPKKVSDILIEQFFFRCHMLINVLHRPTFYVRYNDFWEKPHLRKPAFTSLLYAIYASALLATPVEVQKTWALGEDERYLQVDYHQAFRYALASSNFLFEPDLNALQALVLCQVVFDSDRIRAPPSLVGLILHVALCMGLHRDGSLYGLNPVISEIRRRVWANIVLSDLRTSETIGYPPQIVEGNYDTRLPSALPDEIHNVDSSVIISEATFVNIITKVSRAYSKCLKVLLGIIAPNYTRLLELDRELSNFFKELIEVNIPTSNTMHERHIRLLVSYLSNRFPILLHFPFLLKKNSAQFAYSHSRALESATLALNQLYELGSNPEYSKYSWYLWRYPPFHPCIVLLLDLLNSQKIIYLDDERVVLLNKIFSLFPRSSGKEHYQKAWALLQTSRAKVWEKLGLSTVDVSTTDVRLTNFEFFDANNLDINWDDWDAIFQHCPF.

A DNA-binding region (zn(2)-C6 fungal-type) is located at residues 23–51; the sequence is CLACRRKKLKCDHGRPCSNCLKRSTIQSC. Positions 93–113 are enriched in polar residues; that stretch reads GTKSQSDYENQQSHNLPSTPS. The disordered stretch occupies residues 93–119; it reads GTKSQSDYENQQSHNLPSTPSADAETQ.

It localises to the nucleus. The protein resides in the cytoplasm. Its subcellular location is the cytoskeleton. The protein localises to the spindle. This is an uncharacterized protein from Schizosaccharomyces pombe (strain 972 / ATCC 24843) (Fission yeast).